Consider the following 260-residue polypeptide: MIIVLSPAKSLDYETPPHVRKHTIPDFVDDAAELIGGLRRLSPQQIASLMDISDQLAHLNFQRYAEWSPKFGTHNAKQAVLAFNGDVYEGFNAKTLSSADLDYAQNHVRVLSGLYGLLRPLDLLQPYRLEMGTRFANPRGKDLYAFWGERITQALNAQLKKNAVASRVLVNCASGEYFKSVKPKLLEAPIITPVFEDWKGGRYKIISFHAKRARGLMARYAVENRIDRPEQLKDFDADGYAFDAEASNDSTYVFRRRVVE.

The protein belongs to the UPF0246 family.

The protein is UPF0246 protein Bphyt_1375 of Paraburkholderia phytofirmans (strain DSM 17436 / LMG 22146 / PsJN) (Burkholderia phytofirmans).